The following is a 182-amino-acid chain: Lipoprotein signal peptidase (182 aa).

4 consecutive transmembrane segments (helical) span residues 15-35 (IYLG…FLVI), 44-64 (LEVF…FVFG), 65-85 (AFQD…VFLI), and 97-117 (PWGW…KFFV). Active-site residues include aspartate 140 and aspartate 162. The helical transmembrane segment at 155-175 (WPAFNVADSCVTIGLTILIFT) threads the bilayer.

The protein belongs to the peptidase A8 family.

It is found in the cell inner membrane. The enzyme catalyses Release of signal peptides from bacterial membrane prolipoproteins. Hydrolyzes -Xaa-Yaa-Zaa-|-(S,diacylglyceryl)Cys-, in which Xaa is hydrophobic (preferably Leu), and Yaa (Ala or Ser) and Zaa (Gly or Ala) have small, neutral side chains.. Its pathway is protein modification; lipoprotein biosynthesis (signal peptide cleavage). Functionally, this protein specifically catalyzes the removal of signal peptides from prolipoproteins. The polypeptide is Lipoprotein signal peptidase (Leptospira interrogans serogroup Icterohaemorrhagiae serovar Lai (strain 56601)).